The chain runs to 83 residues: Cytochrome b559 subunit alpha (83 aa).

The helical transmembrane segment at Val-21–Trp-35 threads the bilayer. His-23 is a heme binding site.

This sequence belongs to the PsbE/PsbF family. In terms of assembly, heterodimer of an alpha subunit and a beta subunit. PSII is composed of 1 copy each of membrane proteins PsbA, PsbB, PsbC, PsbD, PsbE, PsbF, PsbH, PsbI, PsbJ, PsbK, PsbL, PsbM, PsbT, PsbX, PsbY, PsbZ, Psb30/Ycf12, at least 3 peripheral proteins of the oxygen-evolving complex and a large number of cofactors. It forms dimeric complexes. Heme b serves as cofactor.

The protein localises to the plastid. Its subcellular location is the chloroplast thylakoid membrane. Its function is as follows. This b-type cytochrome is tightly associated with the reaction center of photosystem II (PSII). PSII is a light-driven water:plastoquinone oxidoreductase that uses light energy to abstract electrons from H(2)O, generating O(2) and a proton gradient subsequently used for ATP formation. It consists of a core antenna complex that captures photons, and an electron transfer chain that converts photonic excitation into a charge separation. The chain is Cytochrome b559 subunit alpha from Amborella trichopoda.